Reading from the N-terminus, the 292-residue chain is Acetyl-coenzyme A carboxylase carboxyl transferase subunit beta (292 aa).

A CoA carboxyltransferase N-terminal domain is found at 29-292; it reads LWVKCSECGQ…HGVKELVQTN (264 aa). Residues Cys-33, Cys-36, Cys-52, and Cys-55 each coordinate Zn(2+). The C4-type zinc finger occupies 33–55; sequence CSECGQVAYRKDLISNFNVCSNC.

The protein belongs to the AccD/PCCB family. As to quaternary structure, acetyl-CoA carboxylase is a heterohexamer composed of biotin carboxyl carrier protein (AccB), biotin carboxylase (AccC) and two subunits each of ACCase subunit alpha (AccA) and ACCase subunit beta (AccD). It depends on Zn(2+) as a cofactor.

It localises to the cytoplasm. It carries out the reaction N(6)-carboxybiotinyl-L-lysyl-[protein] + acetyl-CoA = N(6)-biotinyl-L-lysyl-[protein] + malonyl-CoA. Its pathway is lipid metabolism; malonyl-CoA biosynthesis; malonyl-CoA from acetyl-CoA: step 1/1. Its function is as follows. Component of the acetyl coenzyme A carboxylase (ACC) complex. Biotin carboxylase (BC) catalyzes the carboxylation of biotin on its carrier protein (BCCP) and then the CO(2) group is transferred by the transcarboxylase to acetyl-CoA to form malonyl-CoA. This is Acetyl-coenzyme A carboxylase carboxyl transferase subunit beta from Prochlorococcus marinus subsp. pastoris (strain CCMP1986 / NIES-2087 / MED4).